A 486-amino-acid polypeptide reads, in one-letter code: MITTEIKRVKNHINGEWVESTGTEVEAVPNPATGKIIAYVPLSPKEDVEKAVEAAKAAFETWSKVPVPNRSRNLYKYLQLLQENKDELAKIITLENGKTLTDATGEVQRGIEAVELATSAPNLMMGQALPNIASGIDGSIWRYPIGVVAGITPFNFPMMIPLWMFPLAIACGNTFVLKTSERTPLLAERLVELFYEAGFPKGVLNLVQGGKDVVNSILENKDIQAVSFVGSEPVARYVYETGTKHGKRVQALAGAKNHAIVMPDCNLEKTVQGVIGSAFASSGERCMACSVVAVVDEIADEFIDVLVAETKKLKVGDGFNEDNYVGPLIRESHKERVLGYISSGVADGATLLVDGRKINEEVGEGYFVGATIFDGVNQEMKIWQDEIFAPVLSIVRVKDLEEGIKLTNQSKFANGAVIYTSNGKHAQTFRDNIDAGMIGVNVNVPAPMAFFAFAGNKASFFGDLGTNGTDGVQFYTRKKVVTERWF.

NAD(+)-binding residues include F154, K178, E181, R182, and S231. The Nucleophile role is filled by C286. Position 386 (E386) interacts with NAD(+).

The protein belongs to the aldehyde dehydrogenase family. IolA subfamily. Homotetramer.

The catalysed reaction is 3-oxopropanoate + NAD(+) + CoA + H2O = hydrogencarbonate + acetyl-CoA + NADH + H(+). It carries out the reaction 2-methyl-3-oxopropanoate + NAD(+) + CoA + H2O = propanoyl-CoA + hydrogencarbonate + NADH + H(+). Its pathway is polyol metabolism; myo-inositol degradation into acetyl-CoA; acetyl-CoA from myo-inositol: step 7/7. Functionally, catalyzes the oxidation of malonate semialdehyde (MSA) and methylmalonate semialdehyde (MMSA) into acetyl-CoA and propanoyl-CoA, respectively. Is involved in a myo-inositol catabolic pathway. Bicarbonate, and not CO2, is the end-product of the enzymatic reaction. In Bacillus cereus (strain G9842), this protein is Malonate-semialdehyde dehydrogenase.